The primary structure comprises 381 residues: MSRLQFQLQTTDGHARRGRLTFPRGTVETPAFMPVGTYGSVKGILPEQIRALGAEIILGNTFHLYLRPGLDVIGDHGGLHGFARWDGPILTDSGGFQVFSLAHRRKITEQGVTFSSPTDGARVFLGPEESMQIQKVLDSDIVMIFDECTPYPATEDVARRSMELSLRWAQRSRQAHDGLGNDAALFGIVQGGVHPDLRSRSLDGLQAIGFDGYAIGGLAVGEPEHERNAMLEHLHPRLPAERPRYLMGVGRPEDLVEGVARGVDMFDCVMPTRNARNGHYFTSFGTVRIRNAKYERDLDTIEPGCGCHACSSGYTRAYLRHLDRCNEMLAPMLGTLHNLWYYEKLMADMRAAIAAGTFVEFRRSFYAARGATTPPLPGESS.

Residue aspartate 92 is the Proton acceptor of the active site. Substrate contacts are provided by residues 92–96 (DSGGF), aspartate 146, glutamine 190, and glycine 217. The interval 248 to 254 (GVGRPED) is RNA binding. Catalysis depends on aspartate 267, which acts as the Nucleophile. An RNA binding; important for wobble base 34 recognition region spans residues 272–276 (TRNAR). Zn(2+) is bound by residues cysteine 305, cysteine 307, cysteine 310, and histidine 337.

Belongs to the queuine tRNA-ribosyltransferase family. Homodimer. Within each dimer, one monomer is responsible for RNA recognition and catalysis, while the other monomer binds to the replacement base PreQ1. Requires Zn(2+) as cofactor.

It carries out the reaction 7-aminomethyl-7-carbaguanine + guanosine(34) in tRNA = 7-aminomethyl-7-carbaguanosine(34) in tRNA + guanine. Its pathway is tRNA modification; tRNA-queuosine biosynthesis. Functionally, catalyzes the base-exchange of a guanine (G) residue with the queuine precursor 7-aminomethyl-7-deazaguanine (PreQ1) at position 34 (anticodon wobble position) in tRNAs with GU(N) anticodons (tRNA-Asp, -Asn, -His and -Tyr). Catalysis occurs through a double-displacement mechanism. The nucleophile active site attacks the C1' of nucleotide 34 to detach the guanine base from the RNA, forming a covalent enzyme-RNA intermediate. The proton acceptor active site deprotonates the incoming PreQ1, allowing a nucleophilic attack on the C1' of the ribose to form the product. After dissociation, two additional enzymatic reactions on the tRNA convert PreQ1 to queuine (Q), resulting in the hypermodified nucleoside queuosine (7-(((4,5-cis-dihydroxy-2-cyclopenten-1-yl)amino)methyl)-7-deazaguanosine). The chain is Queuine tRNA-ribosyltransferase from Xanthomonas campestris pv. campestris (strain B100).